A 433-amino-acid polypeptide reads, in one-letter code: Enolase (433 aa).

(2R)-2-phosphoglycerate is bound at residue glutamine 167. Catalysis depends on glutamate 209, which acts as the Proton donor. Mg(2+)-binding residues include aspartate 246, glutamate 291, and aspartate 318. The (2R)-2-phosphoglycerate site is built by lysine 343, arginine 372, serine 373, and lysine 394. The active-site Proton acceptor is lysine 343.

It belongs to the enolase family. In terms of assembly, component of the RNA degradosome, a multiprotein complex involved in RNA processing and mRNA degradation. Requires Mg(2+) as cofactor.

It is found in the cytoplasm. It localises to the secreted. The protein resides in the cell surface. It carries out the reaction (2R)-2-phosphoglycerate = phosphoenolpyruvate + H2O. It functions in the pathway carbohydrate degradation; glycolysis; pyruvate from D-glyceraldehyde 3-phosphate: step 4/5. Catalyzes the reversible conversion of 2-phosphoglycerate (2-PG) into phosphoenolpyruvate (PEP). It is essential for the degradation of carbohydrates via glycolysis. This is Enolase from Marinomonas sp. (strain MWYL1).